Here is a 289-residue protein sequence, read N- to C-terminus: ATP phosphoribosyltransferase (289 aa).

Belongs to the ATP phosphoribosyltransferase family. Long subfamily. It depends on Mg(2+) as a cofactor.

It is found in the cytoplasm. It catalyses the reaction 1-(5-phospho-beta-D-ribosyl)-ATP + diphosphate = 5-phospho-alpha-D-ribose 1-diphosphate + ATP. Its pathway is amino-acid biosynthesis; L-histidine biosynthesis; L-histidine from 5-phospho-alpha-D-ribose 1-diphosphate: step 1/9. Feedback inhibited by histidine. Catalyzes the condensation of ATP and 5-phosphoribose 1-diphosphate to form N'-(5'-phosphoribosyl)-ATP (PR-ATP). Has a crucial role in the pathway because the rate of histidine biosynthesis seems to be controlled primarily by regulation of HisG enzymatic activity. In Methanosarcina mazei (strain ATCC BAA-159 / DSM 3647 / Goe1 / Go1 / JCM 11833 / OCM 88) (Methanosarcina frisia), this protein is ATP phosphoribosyltransferase.